A 31-amino-acid polypeptide reads, in one-letter code: MPTLTSYFGFLLAALTITSVLFIGLNKIRLI.

A helical transmembrane segment spans residues 4 to 24; that stretch reads LTSYFGFLLAALTITSVLFIG.

Belongs to the PetL family. In terms of assembly, the 4 large subunits of the cytochrome b6-f complex are cytochrome b6, subunit IV (17 kDa polypeptide, PetD), cytochrome f and the Rieske protein, while the 4 small subunits are PetG, PetL, PetM and PetN. The complex functions as a dimer.

The protein localises to the plastid. It localises to the chloroplast thylakoid membrane. Functionally, component of the cytochrome b6-f complex, which mediates electron transfer between photosystem II (PSII) and photosystem I (PSI), cyclic electron flow around PSI, and state transitions. PetL is important for photoautotrophic growth as well as for electron transfer efficiency and stability of the cytochrome b6-f complex. The sequence is that of Cytochrome b6-f complex subunit 6 from Silene conica (Striped corn catchfly).